A 510-amino-acid polypeptide reads, in one-letter code: Probable allantoinase 2 (510 aa).

Residues His97, His99, Lys185, His228, His287, and Asp360 each coordinate Zn(2+). Residue Lys185 is modified to N6-carboxylysine.

Belongs to the metallo-dependent hydrolases superfamily. Allantoinase family. As to quaternary structure, homotetramer. Zn(2+) serves as cofactor. Post-translationally, carboxylation allows a single lysine to coordinate two zinc ions.

The catalysed reaction is (S)-allantoin + H2O = allantoate + H(+). It functions in the pathway nitrogen metabolism; (S)-allantoin degradation; allantoate from (S)-allantoin: step 1/1. This is Probable allantoinase 2 (allB2) from Dictyostelium discoideum (Social amoeba).